The sequence spans 652 residues: Probable potassium transport system protein Kup (652 aa).

The segment covering 1–20 (MSNDTSPGTSSVDSKSSDPS) has biased composition (low complexity). The tract at residues 1 to 26 (MSNDTSPGTSSVDSKSSDPSYGVPGH) is disordered. 12 consecutive transmembrane segments (helical) span residues 36–56 (LSLGAIGIVFGDIGTSPLYAL), 76–96 (LVSLIFWTMGLVVTVKYVMFI), 125–145 (WLIVLGVFATALFYGDSMITP), 161–181 (PSFDSWVPPVSVVILIGLFCI), 193–213 (FGPIMLVYFATLAILGAFNII), 228–248 (AIHFFASDPLQGFWALGSVVL), 270–290 (LGWYWVVFPALTLNYLGQCAL), 314–334 (LIILATFAAVIASQAVITGAF), 362–382 (IYIPSVNWVLMFMVMVLIAMF), 391–411 (AYGIAVTGTMFITSCMMGVLV), 419–439 (AWQSIPLVSFFLLIDGAFFLS), and 444–464 (IPEGGWFPLLVGFVVFTMLMT).

This sequence belongs to the HAK/KUP transporter (TC 2.A.72) family.

It localises to the cell inner membrane. It catalyses the reaction K(+)(in) + H(+)(in) = K(+)(out) + H(+)(out). Its function is as follows. Transport of potassium into the cell. Likely operates as a K(+):H(+) symporter. This chain is Probable potassium transport system protein Kup, found in Zymomonas mobilis subsp. mobilis (strain ATCC 31821 / ZM4 / CP4).